Consider the following 346-residue polypeptide: tRNA pseudouridine synthase D (346 aa).

The active-site Nucleophile is the Asp83. Positions 159–305 constitute a TRUD domain; that stretch reads GVPNYFGEQR…LKQERRALRV (147 aa).

Belongs to the pseudouridine synthase TruD family.

The catalysed reaction is uridine(13) in tRNA = pseudouridine(13) in tRNA. In terms of biological role, responsible for synthesis of pseudouridine from uracil-13 in transfer RNAs. The polypeptide is tRNA pseudouridine synthase D (Hydrogenovibrio crunogenus (strain DSM 25203 / XCL-2) (Thiomicrospira crunogena)).